Here is a 44-residue protein sequence, read N- to C-terminus: Relaxin (44 aa).

Q1 is modified (pyrrolidone carboxylic acid). 3 disulfides stabilise this stretch: C3-C31, C15-C44, and C30-C35.

The protein belongs to the insulin family. In terms of assembly, heterodimer of a B chain and an A chain linked by two disulfide bonds.

The protein localises to the secreted. This Carcharias taurus (Sand tiger shark) protein is Relaxin.